Reading from the N-terminus, the 213-residue chain is Germin-like protein 8-14 (213 aa).

The first 23 residues, 1–23 (MAKAVMMLPVLLSFLLLPFSSMA), serve as a signal peptide directing secretion. Residues Cys-29 and Cys-44 are joined by a disulfide bond. A Cupin type-1 domain is found at 56–203 (HGLAAAGNTS…VTFLDDAQVK (148 aa)). The N-linked (GlcNAc...) asparagine glycan is linked to Asn-63. Mn(2+) is bound by residues His-104, His-106, Glu-111, and His-151.

It belongs to the germin family. Oligomer (believed to be a pentamer but probably hexamer). In terms of processing, phosphorylated on threonine residue.

The protein localises to the secreted. It is found in the extracellular space. Its subcellular location is the apoplast. In terms of biological role, may play a role in plant defense. Probably has no oxalate oxidase activity even if the active site is conserved. The polypeptide is Germin-like protein 8-14 (GER5) (Oryza sativa subsp. japonica (Rice)).